Here is a 427-residue protein sequence, read N- to C-terminus: Trigger factor (427 aa).

A PPIase FKBP-type domain is found at 163–248; sequence GDTVVIDFVG…IHEVKAKEVP (86 aa).

Belongs to the FKBP-type PPIase family. Tig subfamily.

The protein resides in the cytoplasm. It carries out the reaction [protein]-peptidylproline (omega=180) = [protein]-peptidylproline (omega=0). Its function is as follows. Involved in protein export. Acts as a chaperone by maintaining the newly synthesized protein in an open conformation. Functions as a peptidyl-prolyl cis-trans isomerase. The protein is Trigger factor of Streptococcus pneumoniae serotype 4 (strain ATCC BAA-334 / TIGR4).